The following is a 375-amino-acid chain: Succinyl-diaminopimelate desuccinylase (375 aa).

His66 is a binding site for Zn(2+). The active site involves Asp68. A Zn(2+)-binding site is contributed by Asp99. Glu133 acts as the Proton acceptor in catalysis. The Zn(2+) site is built by Glu134, Glu162, and His348.

This sequence belongs to the peptidase M20A family. DapE subfamily. As to quaternary structure, homodimer. The cofactor is Zn(2+). Co(2+) serves as cofactor.

It catalyses the reaction N-succinyl-(2S,6S)-2,6-diaminopimelate + H2O = (2S,6S)-2,6-diaminopimelate + succinate. It participates in amino-acid biosynthesis; L-lysine biosynthesis via DAP pathway; LL-2,6-diaminopimelate from (S)-tetrahydrodipicolinate (succinylase route): step 3/3. Its function is as follows. Catalyzes the hydrolysis of N-succinyl-L,L-diaminopimelic acid (SDAP), forming succinate and LL-2,6-diaminopimelate (DAP), an intermediate involved in the bacterial biosynthesis of lysine and meso-diaminopimelic acid, an essential component of bacterial cell walls. The protein is Succinyl-diaminopimelate desuccinylase of Serratia proteamaculans (strain 568).